The following is a 583-amino-acid chain: Chloroplast sensor kinase, chloroplastic (583 aa).

A chloroplast-targeting transit peptide spans 1-50; sequence MSSIYLHGLSRRRRIGSVIVAIYMLDSCGAFLSASGSGRYPGFSYRGLSV. Residues 97 to 277 form a GAF region; sequence LFQELALSQL…SMDTERAALQ (181 aa). Cys-115 provides a ligand contact to [3Fe-4S] cluster. At His-292 the chain carries Phosphohistidine; by autocatalysis. The tract at residues 412-442 is disordered; the sequence is AASGSNGPSNSTTSFSGNGSDVSTYTEDDGA. The span at 414 to 431 shows a compositional bias: low complexity; the sequence is SGSNGPSNSTTSFSGNGS. The 137-residue stretch at 447-583 folds into the Histidine kinase domain; the sequence is SSLFSEMDLE…ALDWTLRKHW (137 aa).

It belongs to the chloroplast sensor kinase protein family. Oligomerizes. It depends on [3Fe-4S] cluster as a cofactor. In terms of processing, autophosphorylates, possibly on His-292.

It localises to the plastid. It is found in the chloroplast stroma. It carries out the reaction ATP + protein L-histidine = ADP + protein N-phospho-L-histidine.. In terms of biological role, sensor kinase that senses the plastoquinone (PQ) redox state involved in stoichiometry adjustment of both photosystems (e.g. long-term adaptation via transcriptional regulation of reaction center genes of photosystems I and II) and state transitions (e.g. short-term adaptation involving reversible post-translational phosphorylation of light-harvesting complex II, LHC II), thus linking photosynthesis with gene expression in chloroplasts. Reduced PQ suppresses its autophosphorylation activity. In Phaeodactylum tricornutum (strain CCAP 1055/1), this protein is Chloroplast sensor kinase, chloroplastic.